The chain runs to 920 residues: Isoleucine--tRNA ligase (920 aa).

Positions 58–68 (PYANGHLHLGH) match the 'HIGH' region motif. Glu569 is a binding site for L-isoleucyl-5'-AMP. Positions 610 to 614 (KMSKS) match the 'KMSKS' region motif. Lys613 contributes to the ATP binding site. Cys895, Cys898, Cys910, and Cys913 together coordinate Zn(2+).

It belongs to the class-I aminoacyl-tRNA synthetase family. IleS type 1 subfamily. Monomer. The cofactor is Zn(2+).

The protein resides in the cytoplasm. The enzyme catalyses tRNA(Ile) + L-isoleucine + ATP = L-isoleucyl-tRNA(Ile) + AMP + diphosphate. Functionally, catalyzes the attachment of isoleucine to tRNA(Ile). As IleRS can inadvertently accommodate and process structurally similar amino acids such as valine, to avoid such errors it has two additional distinct tRNA(Ile)-dependent editing activities. One activity is designated as 'pretransfer' editing and involves the hydrolysis of activated Val-AMP. The other activity is designated 'posttransfer' editing and involves deacylation of mischarged Val-tRNA(Ile). The chain is Isoleucine--tRNA ligase from Helicobacter pylori (strain G27).